A 346-amino-acid chain; its full sequence is 3-keto-steroid reductase ERG27 (346 aa).

Residues Leu-19, Thr-42, and Lys-48 each coordinate NADP(+). Residues Ser-182 and Tyr-205 each act as proton donor in the active site. Positions 205, 209, and 241 each coordinate NADP(+). The Lowers pKa of active site Tyr role is filled by Lys-209. Residues Phe-242–Leu-262 form a helical membrane-spanning segment. An N-linked (GlcNAc...) asparagine glycan is attached at Asn-272.

The protein belongs to the short-chain dehydrogenases/reductases (SDR) family. ERG27 subfamily. Heterotetramer of ERG25, ERG26, ERG27 and ERG28. ERG28 acts as a scaffold to tether ERG27 and other 4,4-demethylation-related enzymes, forming a demethylation enzyme complex, in the endoplasmic reticulum. Interacts with ERG25 and ERG28. Also interacts with ERG7, but only in lipid particles.

It is found in the endoplasmic reticulum membrane. The protein resides in the lipid droplet. The enzyme catalyses 3-dehydro-4alpha-methylzymosterol + NADPH + H(+) = 4alpha-methylzymosterol + NADP(+). Its pathway is steroid biosynthesis; zymosterol biosynthesis; zymosterol from lanosterol: step 5/6. Functionally, 3-keto-steroid reductase; part of the third module of ergosterol biosynthesis pathway that includes the late steps of the pathway. ERG27 is a catalytic component of the C-4 demethylation complex that catalyzes the reduction of the keto group on the C-3. The third module or late pathway involves the ergosterol synthesis itself through consecutive reactions that mainly occur in the endoplasmic reticulum (ER) membrane. Firstly, the squalene synthase ERG9 catalyzes the condensation of 2 farnesyl pyrophosphate moieties to form squalene, which is the precursor of all steroids. Squalene synthase is crucial for balancing the incorporation of farnesyl diphosphate (FPP) into sterol and nonsterol isoprene synthesis. Secondly, the squalene epoxidase ERG1 catalyzes the stereospecific oxidation of squalene to (S)-2,3-epoxysqualene, which is considered to be a rate-limiting enzyme in steroid biosynthesis. Then, the lanosterol synthase ERG7 catalyzes the cyclization of (S)-2,3 oxidosqualene to lanosterol, a reaction that forms the sterol core. In the next steps, lanosterol is transformed to zymosterol through a complex process involving various demethylation, reduction and desaturation reactions. The lanosterol 14-alpha-demethylase ERG11 (also known as CYP51) catalyzes C14-demethylation of lanosterol to produce 4,4'-dimethyl cholesta-8,14,24-triene-3-beta-ol, which is critical for ergosterol biosynthesis. The C-14 reductase ERG24 reduces the C14=C15 double bond of 4,4-dimethyl-cholesta-8,14,24-trienol to produce 4,4-dimethyl-cholesta-8,24-dienol. 4,4-dimethyl-cholesta-8,24-dienol is substrate of the C-4 demethylation complex ERG25-ERG26-ERG27 in which ERG25 catalyzes the three-step monooxygenation required for the demethylation of 4,4-dimethyl and 4alpha-methylsterols, ERG26 catalyzes the oxidative decarboxylation that results in a reduction of the 3-beta-hydroxy group at the C-3 carbon to an oxo group, and ERG27 is responsible for the reduction of the keto group on the C-3. ERG28 has a role as a scaffold to help anchor ERG25, ERG26 and ERG27 to the endoplasmic reticulum and ERG29 regulates the activity of the iron-containing C4-methylsterol oxidase ERG25. Then, the sterol 24-C-methyltransferase ERG6 catalyzes the methyl transfer from S-adenosyl-methionine to the C-24 of zymosterol to form fecosterol. The C-8 sterol isomerase ERG2 catalyzes the reaction which results in unsaturation at C-7 in the B ring of sterols and thus converts fecosterol to episterol. The sterol-C5-desaturase ERG3 then catalyzes the introduction of a C-5 double bond in the B ring to produce 5-dehydroepisterol. The C-22 sterol desaturase ERG5 further converts 5-dehydroepisterol into ergosta-5,7,22,24(28)-tetraen-3beta-ol by forming the C-22(23) double bond in the sterol side chain. Finally, ergosta-5,7,22,24(28)-tetraen-3beta-ol is substrate of the C-24(28) sterol reductase ERG4 to produce ergosterol. In terms of biological role, facilitates the association of ERG7 with lipid particles preventing its digestion in the endoplasmic reticulum and the lipid particles. The sequence is that of 3-keto-steroid reductase ERG27 from Candida albicans (strain SC5314 / ATCC MYA-2876) (Yeast).